A 95-amino-acid chain; its full sequence is Cytosolic calcium-binding protein 3 (95 aa).

6 tandem repeats follow at residues 30–35 (VEDAEK), 39–43 (DEEEK), 54–59 (VEEEKK), 67–71 (PEEKK), 75–79 (LEEKQ), and 90–94 (VEKAK). The interval 30–94 (VEDAEKTNED…AEEVAVEKAK (65 aa)) is 6 X 5 AA approximate repeats of V-E-E-K-K. Residues 54–95 (VEEEKKAEEVTETPEEKKTEALEEKQTEVAAAEEVAVEKAKE) are disordered. Residues 55-80 (EEEKKAEEVTETPEEKKTEALEEKQT) show a composition bias toward basic and acidic residues.

In terms of tissue distribution, low levels in roots (e.g. in cambium) and barely expressed in stems, shoots, flowers, siliques and leaves.

The protein resides in the cytoplasm. It localises to the cytosol. Binds calcium Ca(2+) and may act as a signal mediator to buffer Ca(2+). This Arabidopsis thaliana (Mouse-ear cress) protein is Cytosolic calcium-binding protein 3.